A 664-amino-acid polypeptide reads, in one-letter code: Ubiquinol oxidase subunit 1 (664 aa).

A run of 2 helical transmembrane segments spans residues 15–35 and 57–77; these read PILVGTFIGVVIVGVAVLGLI and LAAMYIILALVALFRGFADAI. Residue His-106 coordinates heme b. 12 helical membrane passes run 109–129, 136–156, 190–210, 233–253, 278–298, 316–336, 347–367, 383–403, 414–434, 456–476, 490–510, and 603–623; these read IMIFFLAMAFMTGLFNFIVPL, VAFPFLNNLSFWMTAVAFILV, YIWAVQISGVGTLLTGVNFFV, LCASILIMVAFPVLTVAVGLL, LIWAWGHPEVYILVIPAFGVF, MVYATCSIMVLSFLVWVHHFF, FFGIATMIISIPTGIKLFNWL, WAVGFMITFTIGGMTGVMLAI, LFLIAHFHNTIIGGVYFGYIC, AFWFWFVGFYCAFVPLYIVGF, AWHPWLLVAEVGAVLVMLGIA, and ALIFGFAAVWYIWWLAAVGLV. Cu cation contacts are provided by His-284, Tyr-288, His-333, and His-334. Residues 284–288 constitute a cross-link (1'-histidyl-3'-tyrosine (His-Tyr)); the sequence is HPEVY. His-419 is a binding site for Fe(II)-heme a. A heme b-binding site is contributed by His-421.

It belongs to the heme-copper respiratory oxidase family. As to quaternary structure, heterotetramer of the subunits 1, 2, 3 and 4.

It is found in the cell membrane. Functionally, catalytic subunit of the enzyme. Electrons originating in a quinol are transferred to the bimetallic center formed by heme a and copper B. This Acetobacter aceti protein is Ubiquinol oxidase subunit 1 (cyaA).